We begin with the raw amino-acid sequence, 503 residues long: Sugar phosphate exchanger 3 (503 aa).

The chain crosses the membrane as a helical span at residues 20-40 (YTHHHLAAFLLTFFSYSLLHA). N-linked (GlcNAc...) asparagine glycans are attached at residues asparagine 62 and asparagine 71. 5 helical membrane-spanning segments follow: residues 87–107 (TLFL…GLFI), 119–139 (LVLT…GTLT), 152–172 (LVWI…VAIM), 183–203 (FVFG…AFLA), and 214–234 (AFLV…FGLV). Asparagine 275 carries N-linked (GlcNAc...) asparagine glycosylation. 6 helical membrane passes run 300-322 (GVLL…FFWL), 342-362 (IWYD…SDLM), 367-387 (PVLT…SHSP), 395-415 (FIMS…SSAI), 437-457 (GIVD…VPLI), and 466-486 (VFYF…PLIV).

This sequence belongs to the major facilitator superfamily. Organophosphate:Pi antiporter (OPA) (TC 2.A.1.4) family.

The protein resides in the endoplasmic reticulum membrane. It is found in the lysosome membrane. Functionally, unlike the other SLC37 members, seems to lack glucose-6-phosphate antiporter activity. This is Sugar phosphate exchanger 3 (slc37a3) from Xenopus laevis (African clawed frog).